The chain runs to 659 residues: L-type lectin-domain containing receptor kinase V.7 (659 aa).

The first 25 residues, 1 to 25, serve as a signal peptide directing secretion; that stretch reads MSHKVLQIVLVLLLTLFSSTHNSNG. Residues 22–244 are legume-lectin like; it reads NSNGNFLMEE…GALYYVMQFS (223 aa). Topologically, residues 26–275 are extracellular; it reads NFLMEEAAAA…PKKSYDRTRR (250 aa). 4 N-linked (GlcNAc...) asparagine glycosylation sites follow: Asn45, Asn64, Asn110, and Asn192. A helical transmembrane segment spans residues 276-296; sequence ILAVCLTLAVFTALVASGIGF. The Cytoplasmic portion of the chain corresponds to 297–659; it reads VFYVRHKKVK…LTNSFVSHGR (363 aa). The 263-residue stretch at 333–595 folds into the Protein kinase domain; sequence FKEKQLLGKG…GLLCAHHTEL (263 aa). ATP-binding positions include 339–347 and Lys362; that span reads LGKGGFGQV. The active-site Proton acceptor is Asp462.

In the C-terminal section; belongs to the protein kinase superfamily. Ser/Thr protein kinase family. It in the N-terminal section; belongs to the leguminous lectin family.

Its subcellular location is the cell membrane. The enzyme catalyses L-seryl-[protein] + ATP = O-phospho-L-seryl-[protein] + ADP + H(+). It carries out the reaction L-threonyl-[protein] + ATP = O-phospho-L-threonyl-[protein] + ADP + H(+). Its function is as follows. Involved in resistance response to the pathogenic oomycetes Phytophthora infestans and Phytophthora capsici and to the pathogenic bacteria Pseudomonas syringae. This is L-type lectin-domain containing receptor kinase V.7 from Arabidopsis thaliana (Mouse-ear cress).